Reading from the N-terminus, the 368-residue chain is Protein RecA (368 aa).

G72 to T79 contacts ATP.

Belongs to the RecA family.

Its subcellular location is the cytoplasm. Functionally, can catalyze the hydrolysis of ATP in the presence of single-stranded DNA, the ATP-dependent uptake of single-stranded DNA by duplex DNA, and the ATP-dependent hybridization of homologous single-stranded DNAs. It interacts with LexA causing its activation and leading to its autocatalytic cleavage. The chain is Protein RecA from Petrotoga mobilis (strain DSM 10674 / SJ95).